Reading from the N-terminus, the 273-residue chain is Serine acetyltransferase (273 aa).

The protein belongs to the transferase hexapeptide repeat family. As to quaternary structure, part of the cysteine synthase complex formed at a ratio of 1 copy of this protein and 2 copies of O-acetylserine sulfhydrylase (cysK). The complex reversibly dissociates in the presence of O-acetyl-L-serine in the absence of hydrogen sulfide.

The protein localises to the cytoplasm. It carries out the reaction L-serine + acetyl-CoA = O-acetyl-L-serine + CoA. The protein operates within amino-acid biosynthesis; L-cysteine biosynthesis; L-cysteine from L-serine: step 1/2. Its activity is regulated as follows. Sensitive to feedback inhibition by L-cysteine. In Salmonella typhimurium (strain LT2 / SGSC1412 / ATCC 700720), this protein is Serine acetyltransferase (cysE).